The sequence spans 271 residues: Cartilage-associated protein (271 aa).

Positions 1–15 (MWRTLLAALLATAGA) are cleaved as a signal peptide. N-linked (GlcNAc...) asparagine glycosylation occurs at Asn76.

This sequence belongs to the leprecan family. As to expression, found in articular chondrocytes. Expressed in a variety of tissues.

The protein localises to the secreted. It is found in the extracellular space. It localises to the extracellular matrix. Necessary for efficient 3-hydroxylation of fibrillar collagen prolyl residues. The polypeptide is Cartilage-associated protein (CRTAP) (Gallus gallus (Chicken)).